Consider the following 3902-residue polypeptide: Mediator of RNA polymerase II transcription subunit 12 (3902 aa).

Disordered regions lie at residues 414-576 (ESLT…EELP), 619-674 (FEPF…NPKL), 694-940 (AFDP…LEAL), 977-1029 (VVEK…PEPP), 1812-1831 (TSHK…TETR), 2463-2675 (TVEP…NRKQ), 2719-2771 (AGAS…SSSM), 2876-3151 (RIME…PEMQ), 3195-3549 (LQAG…SSNQ), and 3563-3902 (AGLN…QQQY). Acidic residues predominate over residues 420–430 (EPEEDPEEGPE). The span at 709 to 721 (PTPPEAPPPPPPV) shows a compositional bias: pro residues. Basic and acidic residues-rich tracts occupy residues 740 to 802 (EDGK…EHLN), 912 to 928 (KAGD…KKPD), 977 to 1004 (VVEK…EKLP), and 1018 to 1027 (KTPEKPKTPE). Residues 1812–1824 (TSHKTKDVKRKSA) show a composition bias toward basic residues. The required for nuclear localization stretch occupies residues 2409 to 3902 (QTTRLDKVAK…MGQFPNQQQY (1494 aa)). A compositionally biased stretch (basic and acidic residues) spans 2474–2547 (AAVKKPEEET…VTAKDTEKDT (74 aa)). A coiled-coil region spans residues 2480–2526 (EEETAEKKKDEAKKADEKTTKADDEKKKDETADAKKDNEKQKEEKDK). Low complexity-rich tracts occupy residues 2548–2566 (AAPT…AAPD), 2614–2632 (SRAN…SSTT), and 2734–2748 (PHPG…QHQG). Over residues 2876–2979 (RIMEEQRILR…ERLERERVAR (104 aa)) the composition is skewed to basic and acidic residues. 4 stretches are compositionally biased toward low complexity: residues 2980-3001 (EALA…QAQQ), 3010-3143 (QQQR…QRNP), 3196-3205 (QAGQAAGQQQ), and 3226-3236 (PQQQQQQPQQP). Positions 3237-3248 (GTSQIPNTTPTR) are enriched in polar residues. Composition is skewed to low complexity over residues 3250–3275 (ANPM…GQPG), 3284–3295 (GQQQQNQFQRQG), and 3317–3389 (GQQQ…FGRQ). The segment covering 3391–3409 (APNQENFQQQPGFNQNAAG) has biased composition (polar residues). Low complexity-rich tracts occupy residues 3410-3446 (QNYQ…QQQN), 3454-3539 (QSQQ…QGNQ), and 3570-3619 (SSGN…RPGM). The span at 3620–3649 (GQQGMGQQGMGQQGGMGQSGRGQPGMGGQS) shows a compositional bias: gly residues. Composition is skewed to low complexity over residues 3663-3700 (MGQP…QQQH), 3710-3742 (QQGR…QQAQ), and 3760-3830 (QQQQ…HRGQ). Positions 3831–3841 (GQQGHGMGGAG) are enriched in gly residues. The span at 3842–3888 (QQHQQVPQQQQNQYFQPQQQQDQRMQQQPGGQQQQQQGQSGQQQNNQ) shows a compositional bias: low complexity. Positions 3889–3902 (HYNNMGQFPNQQQY) are enriched in polar residues.

It belongs to the Mediator complex subunit 12 family. In terms of assembly, component of the Mediator complex.

Its subcellular location is the nucleus. Its function is as follows. Component of the Mediator complex, a coactivator involved in regulated gene transcription of nearly all RNA polymerase II-dependent genes. Mediator functions as a bridge to convey information from gene-specific regulatory proteins to the basal RNA polymerase II transcription machinery. Mediator is recruited to promoters by direct interactions with regulatory proteins and serves as a scaffold for the assembly of a functional preinitiation complex with RNA polymerase II and the general transcription factors. The sequence is that of Mediator of RNA polymerase II transcription subunit 12 (dpy-22) from Caenorhabditis briggsae.